The primary structure comprises 459 residues: Putrescine aminotransferase (459 aa).

Pyridoxal 5'-phosphate-binding positions include 150–151 (GT) and glutamine 274. Lysine 300 bears the N6-(pyridoxal phosphate)lysine mark. Residue threonine 332 coordinates pyridoxal 5'-phosphate.

Belongs to the class-III pyridoxal-phosphate-dependent aminotransferase family. Putrescine aminotransferase subfamily. The cofactor is pyridoxal 5'-phosphate.

The catalysed reaction is an alkane-alpha,omega-diamine + 2-oxoglutarate = an omega-aminoaldehyde + L-glutamate. The enzyme catalyses putrescine + 2-oxoglutarate = 1-pyrroline + L-glutamate + H2O. It carries out the reaction cadaverine + 2-oxoglutarate = 5-aminopentanal + L-glutamate. The protein operates within amine and polyamine degradation; putrescine degradation; 4-aminobutanal from putrescine (transaminase route): step 1/1. Functionally, catalyzes the aminotransferase reaction from putrescine to 2-oxoglutarate, leading to glutamate and 4-aminobutanal, which spontaneously cyclizes to form 1-pyrroline. This is the first step in one of two pathways for putrescine degradation, where putrescine is converted into 4-aminobutanoate (gamma-aminobutyrate or GABA) via 4-aminobutanal. Also functions as a cadaverine transaminase in a a L-lysine degradation pathway to succinate that proceeds via cadaverine, glutarate and L-2-hydroxyglutarate. The chain is Putrescine aminotransferase from Salmonella agona (strain SL483).